Consider the following 556-residue polypeptide: ATP synthase subunit alpha 2 (556 aa).

177–184 (GDRATGKT) is a binding site for ATP. The interval 514–556 (GGHAEDAADDMGGALDGEHASGDATSIAPTPPGGAEAGAPRKR) is disordered. Over residues 546–556 (GGAEAGAPRKR) the composition is skewed to low complexity.

The protein belongs to the ATPase alpha/beta chains family. F-type ATPases have 2 components, CF(1) - the catalytic core - and CF(0) - the membrane proton channel. CF(1) has five subunits: alpha(3), beta(3), gamma(1), delta(1), epsilon(1). CF(0) has three main subunits: a(1), b(2) and c(9-12). The alpha and beta chains form an alternating ring which encloses part of the gamma chain. CF(1) is attached to CF(0) by a central stalk formed by the gamma and epsilon chains, while a peripheral stalk is formed by the delta and b chains.

Its subcellular location is the cell inner membrane. The enzyme catalyses ATP + H2O + 4 H(+)(in) = ADP + phosphate + 5 H(+)(out). Functionally, produces ATP from ADP in the presence of a proton gradient across the membrane. The alpha chain is a regulatory subunit. This Burkholderia thailandensis (strain ATCC 700388 / DSM 13276 / CCUG 48851 / CIP 106301 / E264) protein is ATP synthase subunit alpha 2.